A 722-amino-acid polypeptide reads, in one-letter code: Bifunctional UDP-N-acetylglucosamine 2-epimerase/N-acetylmannosamine kinase (722 aa).

The UDP site is built by Arg-19, Ser-23, Arg-113, His-220, and Asn-253. Positions 259, 271, 280, and 281 each coordinate CMP-N-acetyl-beta-neuraminate. UDP contacts are provided by Val-282, Ser-301, Ser-302, Glu-307, and Arg-321. Positions 406 to 722 (TLSALAVDLG…VLDYTTRRIH (317 aa)) are N-acetylmannosamine kinase. Residue Asp-413 participates in Mg(2+) binding. Gly-416 serves as a coordination point for an N-acyl-D-mannosamine 6-phosphate. Positions 417, 418, and 420 each coordinate ADP. An N-acyl-D-mannosamine 6-phosphate contacts are provided by Gly-476, Arg-477, Thr-489, Asn-516, Asp-517, and Gly-545. Gly-476, Arg-477, Thr-489, Asn-516, and Asp-517 together coordinate an N-acyl-D-mannosamine. The active site involves Asp-517. Residues Glu-566 and His-569 each coordinate an N-acyl-D-mannosamine. Position 569 (His-569) interacts with an N-acyl-D-mannosamine 6-phosphate. Zn(2+) is bound by residues His-569, Cys-579, Cys-581, and Cys-586. Residue Glu-588 participates in an N-acyl-D-mannosamine 6-phosphate binding. Glu-588 is an an N-acyl-D-mannosamine binding site.

This sequence in the N-terminal section; belongs to the UDP-N-acetylglucosamine 2-epimerase family. The protein in the C-terminal section; belongs to the ROK (NagC/XylR) family. In terms of assembly, homodimer. Homotetramer. Homohexamer. The hexameric form exhibits both enzyme activities, whereas the dimeric form only catalyzes the phosphorylation of N-acyl-D-mannosamine. Post-translationally, phosphorylated. Phosphorylation by PKC activates the UDP-N-acetylglucosamine 2-epimerase activity. As to expression, widely expressed. Highest expression is observed in liver.

It is found in the cytoplasm. The protein localises to the cytosol. The catalysed reaction is UDP-N-acetyl-alpha-D-glucosamine + H2O = aldehydo-N-acetyl-D-mannosamine + UDP + H(+). It catalyses the reaction an N-acyl-D-mannosamine + ATP = an N-acyl-D-mannosamine 6-phosphate + ADP + H(+). The protein operates within amino-sugar metabolism; N-acetylneuraminate biosynthesis. The UDP-N-acetylglucosamine 2-epimerase activity, in contrast to the N-acetylmannosamine kinase activity, exhibits allosteric regulation by cytidine monophosphate-N-acetylneuraminic acid (CMP-Neu5Ac), the end product of neuraminic acid biosynthesis. Moreover, the activity is contingent upon the oligomeric state of the enzyme. The monomeric form is inactive, while the dimeric form selectively catalyzes the phosphorylation of N-acetylmannosamine. The hexameric form, on the other hand, demonstrates full proficiency in both enzyme activities. Furthermore, the UDP-N-acetylglucosamine 2-epimerase activity is increased by PKC-mediated phosphorylation. Its function is as follows. Bifunctional enzyme that possesses both UDP-N-acetylglucosamine 2-epimerase and N-acetylmannosamine kinase activities, and serves as the initiator of the biosynthetic pathway leading to the production of N-acetylneuraminic acid (NeuAc), a critical precursor in the synthesis of sialic acids. By catalyzing this pivotal and rate-limiting step in sialic acid biosynthesis, this enzyme assumes a pivotal role in governing the regulation of cell surface sialylation. Sialic acids represent a category of negatively charged sugars that reside on the surface of cells as terminal components of glycoconjugates and mediate important functions in various cellular processes, including cell adhesion, signal transduction, and cellular recognition. The chain is Bifunctional UDP-N-acetylglucosamine 2-epimerase/N-acetylmannosamine kinase from Rattus norvegicus (Rat).